A 208-amino-acid chain; its full sequence is Small ribosomal subunit protein eS8 (208 aa).

The protein belongs to the eukaryotic ribosomal protein eS8 family. As to quaternary structure, component of the small ribosomal subunit. Identified in a IGF2BP1-dependent mRNP granule complex containing untranslated mRNAs. Part of the small subunit (SSU) processome, composed of more than 70 proteins and the RNA chaperone small nucleolar RNA (snoRNA) U3.

The protein localises to the cytoplasm. It localises to the membrane. The protein resides in the nucleus. It is found in the nucleolus. Component of the small ribosomal subunit. The ribosome is a large ribonucleoprotein complex responsible for the synthesis of proteins in the cell. Part of the small subunit (SSU) processome, first precursor of the small eukaryotic ribosomal subunit. During the assembly of the SSU processome in the nucleolus, many ribosome biogenesis factors, an RNA chaperone and ribosomal proteins associate with the nascent pre-rRNA and work in concert to generate RNA folding, modifications, rearrangements and cleavage as well as targeted degradation of pre-ribosomal RNA by the RNA exosome. The polypeptide is Small ribosomal subunit protein eS8 (rps-8) (Caenorhabditis elegans).